We begin with the raw amino-acid sequence, 731 residues long: Catalase-peroxidase 2 (731 aa).

Positions Met1–Ser10 are enriched in polar residues. The segment at Met1–Trp26 is disordered. The segment at residues Trp95–Tyr218 is a cross-link (tryptophyl-tyrosyl-methioninium (Trp-Tyr) (with M-244)). Catalysis depends on His96, which acts as the Proton acceptor. The tryptophyl-tyrosyl-methioninium (Tyr-Met) (with W-95) cross-link spans Tyr218–Met244. His259 contacts heme b.

In terms of assembly, homodimer. Requires heme b as cofactor. Post-translationally, formation of the three residue Trp-Tyr-Met cross-link is important for the catalase, but not the peroxidase activity of the enzyme.

The catalysed reaction is H2O2 + AH2 = A + 2 H2O. The enzyme catalyses 2 H2O2 = O2 + 2 H2O. In terms of biological role, bifunctional enzyme with both catalase and broad-spectrum peroxidase activity. The protein is Catalase-peroxidase 2 of Haloarcula marismortui (strain ATCC 43049 / DSM 3752 / JCM 8966 / VKM B-1809) (Halobacterium marismortui).